The following is a 1309-amino-acid chain: MGAASGCRWPWPPLLPLLLMLLLPPPPLPVALALDSALQPGNFTADEAGAEDFAQSFNSSSEQVLFQSTAASWAHDTNITEENARRQEEAALISQEFSEVWGQKAKALYDPIWQNFTSRTLRRIIGVVRTLGSANLSPAKRQQYNSLLSNMTRIYSTAKVCFPNKTATCWSLDPELTNILATSRSYTLLLYAWEGWHNAAGIPLKPLYQDFTALSNEAYKQDGFSDTGAYWRSLYDSPTFTEDLERLYHQLEPLYLNLHAYVRRALHRQYGDRFINLRGPIPAHLLGNMWAQSWNNIYDMVVPFPGKPSLDVTSAMVQKGWNVTHMFRVAEEFFTSLGLLPMPPEFWAESMLEKPSDGREVVCHASAWDFYNRKDFRIKQCTQVTMDQLSTVHHEMGHVQYYLQYKDQHVSLRRGANPGFHEAIGDVLALSVSTPAHLHKIGLLDHVTSDWESDINYLLKMALEKIAFLPFGYLVDQWRWGVFSGRTPPLYNYDWWYLRTKYQGVCPPVVRNETHFDAGAKYHVPNVTPYIRYFVSFILQFQFHQALCKEAGHQGPLHQCDIYQSTRAGAKLRAVLQAGSSRPWQEVLKDMVGSGALDAQPLLDYFQPVTQWLEEQNQRSGDILGWPEYQWRPPMPDNYPEGIDLVSDEAEASKFVEEYDRRSQVVLNEYAEANWDYNTNITAEGSKRVLEKSTQMANHTVKYGIWARKFDVANIQNFTLKRMIKKIQDLERAALPFKELEEYNQILLDMETAYSVASVCHANSTCLQLEPDLTNLMATSRSYEELLWAWKGWRDKVGRAILPYFPKYVELTNKAARLNGYEDGGDAWRAAYEMPFLEQELEQLFQELQPLYLNLHAYVRRALHHHYGPEHINLEGPIPAHLLGNMWAQTWSNIYDLVVPFPSASKMDASEAMINQGWTPQRMFKEADNFFTSLGLLPVPPEFWNKSMLEKPTDGREVVCHASAWDFFNGKDFRIKQCTTVNMEDLVVAHHEMGHIQYFMQYKDLPVTFREGANPGFHEAIGDVLALSVSTPKHLRSINLLKSEDDGYEEDINFLMKMALDKVAFVPFSYLVDQWRWRVFDRSITKENYNQEWWSLRLKYQGLCPPVARSQGDFDPGAKFHIPSSVPYIRYFVSFIIQFQFHEALCQAAGHKGPLHKCDIYQSKEAGRRLADAMKLGLSKPWPEAMQLITGQPNVSASAMMTYFKPLLDWLVTENGRHGEKLGWPQYNWTPNSARLEGSFAGTGRVNFLGLNLEEQQARVGQWVLLFLGVTLLVATMGLTQRLFSIRHQILRRTHRGPQFGSEVELRHS.

The first 33 residues, Met-1–Ala-33, serve as a signal peptide directing secretion. Over Leu-34–Arg-1259 the chain is Extracellular. Residues Asn-42, Asn-58, Asn-78, Asn-115, Asn-135, Asn-150, and Asn-164 are each glycosylated (N-linked (GlcNAc...) asparagine). Peptidase M2 domains follow at residues Thr-44–Pro-627 and Val-646–Pro-1225. A disulfide bridge connects residues Cys-161 and Cys-169. Position 235 (Tyr-235) interacts with chloride. Asn-322 carries an N-linked (GlcNAc...) asparagine glycan. The cysteines at positions 363 and 381 are disulfide-linked. His-394 is a Zn(2+) binding site. The active-site Proton acceptor 1 is the Glu-395. Residues His-398 and Glu-422 each contribute to the Zn(2+) site. Asn-512 carries an N-linked (GlcNAc...) asparagine glycan. His-523 functions as the Proton donor 1 in the catalytic mechanism. N-linked (GlcNAc...) asparagine glycosylation occurs at Asn-526. Arg-532 contributes to the chloride binding site. Cysteines 548 and 560 form a disulfide. Residues Asn-680, Asn-698, Asn-717, and Asn-763 are each glycosylated (N-linked (GlcNAc...) asparagine). Cysteines 760 and 766 form a disulfide. Chloride is bound by residues Arg-794 and Tyr-832. A glycan (N-linked (GlcNAc...) asparagine) is linked at Asn-945. Cys-960 and Cys-978 are oxidised to a cystine. Residue His-991 coordinates Zn(2+). Glu-992 (proton acceptor 2) is an active-site residue. Residues His-995 and Glu-1019 each coordinate Zn(2+). Positions 1093 and 1097 each coordinate chloride. The active-site Proton donor 2 is the His-1121. Arg-1130 contributes to the chloride binding site. Cys-1146 and Cys-1158 are disulfide-bonded. Residues Asn-1194 and Asn-1228 are each glycosylated (N-linked (GlcNAc...) asparagine). The tract at residues His-1218 to Arg-1259 is juxtamembrane stalk. The chain crosses the membrane as a helical span at residues Val-1260–Thr-1280. Topologically, residues Gln-1281 to Ser-1309 are cytoplasmic. Ser-1302 is modified (phosphoserine).

The protein belongs to the peptidase M2 family. As to quaternary structure, monomer and homodimer; homodimerizes following binding to an inhibitor. Interacts with calmodulin (CALM1, CALM2 or CALM3); interaction takes place in the cytoplasmic region and regulates phosphorylation and proteolytic cleavage. Requires Zn(2+) as cofactor. It depends on chloride as a cofactor. In terms of processing, produced following proteolytic cleavage by secretase enzymes that cleave the transmembrane form in the juxtamembrane stalk region upstream of the transmembrane region. Cleavage can take place at different sites of the juxtamembrane stalk region. Post-translationally, phosphorylated by CK2 on Ser-1302; which allows membrane retention. Phosphorylated on tyrosine residues on its extracellular part, promoting cleavage by secretase enzymes and formation of the soluble form (Angiotensin-converting enzyme, soluble form).

It localises to the cell membrane. It is found in the cytoplasm. Its subcellular location is the secreted. The catalysed reaction is Release of a C-terminal dipeptide, oligopeptide-|-Xaa-Yaa, when Xaa is not Pro, and Yaa is neither Asp nor Glu. Thus, conversion of angiotensin I to angiotensin II, with increase in vasoconstrictor activity, but no action on angiotensin II.. The enzyme catalyses angiotensin I + H2O = L-histidyl-L-leucine + angiotensin II. It carries out the reaction bradykinin + H2O = L-Phe-L-Arg + bradykinin(1-7). It catalyses the reaction substance P + H2O = substance P(1-9) + L-Leu-L-Met-NH2. The catalysed reaction is substance P + H2O = substance P(1-8) + Gly-L-Leu-L-Met-NH2. The enzyme catalyses substance P + H2O = L-Phe-L-Phe-Gly-L-Leu-L-Met-NH2 + substance P(1-6). It carries out the reaction neurotensin + H2O = neurotensin(1-11) + L-isoleucyl-L-leucine. It catalyses the reaction goralatide + H2O = N-acetyl-L-seryl-L-aspartate + L-lysyl-L-proline. The catalysed reaction is Met-enkephalin + H2O = L-phenylalanyl-L-methionine + L-tyrosylglycylglycine. The enzyme catalyses Leu-enkephalin + H2O = L-tyrosylglycylglycine + L-phenylalanyl-L-leucine. It carries out the reaction Met-enkephalin-Arg-Phe + H2O = L-arginyl-L-phenylalanine + Met-enkephalin. With respect to regulation, the dipeptidyl carboxypeptidase activity is strongly activated by chloride. The dipeptidyl carboxypeptidase activity is specifically inhibited by lisinopril, captopril and enalaprilat. Dipeptidyl carboxypeptidase that removes dipeptides from the C-terminus of a variety of circulating hormones, such as angiotensin I, bradykinin or enkephalins, thereby playing a key role in the regulation of blood pressure, electrolyte homeostasis or synaptic plasticity. Composed of two similar catalytic domains, each possessing a functional active site, with different selectivity for substrates. Plays a major role in the angiotensin-renin system that regulates blood pressure and sodium retention by the kidney by converting angiotensin I to angiotensin II, resulting in an increase of the vasoconstrictor activity of angiotensin. Also able to inactivate bradykinin, a potent vasodilator, and therefore enhance the blood pressure response. Acts as a regulator of synaptic transmission by mediating cleavage of neuropeptide hormones, such as substance P, neurotensin or enkephalins. Catalyzes degradation of different enkephalin neuropeptides (Met-enkephalin, Leu-enkephalin, Met-enkephalin-Arg-Phe and possibly Met-enkephalin-Arg-Gly-Leu). Acts as a regulator of synaptic plasticity in the nucleus accumbens of the brain by mediating cleavage of Met-enkephalin-Arg-Phe, a strong ligand of Mu-type opioid receptor OPRM1, into Met-enkephalin. Met-enkephalin-Arg-Phe cleavage by ACE decreases activation of OPRM1, leading to long-term synaptic potentiation of glutamate release. Also acts as a regulator of hematopoietic stem cell differentiation by mediating degradation of hemoregulatory peptide N-acetyl-SDKP (AcSDKP). Acts as a regulator of cannabinoid signaling pathway by mediating degradation of hemopressin, an antagonist peptide of the cannabinoid receptor CNR1. Involved in amyloid-beta metabolism by catalyzing degradation of Amyloid-beta protein 40 and Amyloid-beta protein 42 peptides, thereby preventing plaque formation. Catalyzes cleavage of cholecystokinin (maturation of Cholecystokinin-8 and Cholecystokinin-5) and Gonadoliberin-1 (both maturation and degradation) hormones. Degradation of hemoregulatory peptide N-acetyl-SDKP (AcSDKP) and amyloid-beta proteins is mediated by the N-terminal catalytic domain, while angiotensin I and cholecystokinin cleavage is mediated by the C-terminal catalytic region. In terms of biological role, soluble form that is released in blood plasma and other body fluids following proteolytic cleavage in the juxtamembrane stalk region. This is Angiotensin-converting enzyme from Sus scrofa (Pig).